Here is a 322-residue protein sequence, read N- to C-terminus: uncharacterized protein (322 aa).

Basic residues-rich tracts occupy residues 1-16 (MPGN…KSGT) and 43-61 (LRPH…RRPV). Residues 1–69 (MPGNSRRRGA…PVKRADETET (69 aa)) are disordered. The S-adenosyl-L-methionine site is built by Gly-261, Ile-281, and Leu-290.

Belongs to the class IV-like SAM-binding methyltransferase superfamily. RNA methyltransferase TrmH family.

This is an uncharacterized protein from Mycobacterium bovis (strain ATCC BAA-935 / AF2122/97).